Here is a 230-residue protein sequence, read N- to C-terminus: Large ribosomal subunit protein uL1 (230 aa).

Belongs to the universal ribosomal protein uL1 family. In terms of assembly, part of the 50S ribosomal subunit.

Binds directly to 23S rRNA. The L1 stalk is quite mobile in the ribosome, and is involved in E site tRNA release. In terms of biological role, protein L1 is also a translational repressor protein, it controls the translation of the L11 operon by binding to its mRNA. This chain is Large ribosomal subunit protein uL1, found in Bradyrhizobium diazoefficiens (strain JCM 10833 / BCRC 13528 / IAM 13628 / NBRC 14792 / USDA 110).